A 137-amino-acid polypeptide reads, in one-letter code: Peptide methionine sulfoxide reductase MsrB (137 aa).

Residues 7–129 (AEELKKNLSE…NSASLRFTDG (123 aa)) enclose the MsrB domain. Zn(2+)-binding residues include cysteine 46, cysteine 49, cysteine 95, and cysteine 98. The Nucleophile role is filled by cysteine 118.

Belongs to the MsrB Met sulfoxide reductase family. It depends on Zn(2+) as a cofactor.

It catalyses the reaction L-methionyl-[protein] + [thioredoxin]-disulfide + H2O = L-methionyl-(R)-S-oxide-[protein] + [thioredoxin]-dithiol. In Escherichia coli (strain K12 / MC4100 / BW2952), this protein is Peptide methionine sulfoxide reductase MsrB.